The sequence spans 153 residues: Allergen Pet c 1 (153 aa).

The protein belongs to the BetVI family. May form dimers.

The chain is Allergen Pet c 1 from Petroselinum crispum (Parsley).